A 747-amino-acid polypeptide reads, in one-letter code: Ion-translocating oxidoreductase complex subunit C (747 aa).

4Fe-4S ferredoxin-type domains are found at residues 368–397 and 407–436; these read MEPV…QQLY and KARN…VQYY. Cysteine 377, cysteine 380, cysteine 383, cysteine 387, cysteine 416, cysteine 419, cysteine 422, and cysteine 426 together coordinate [4Fe-4S] cluster. The disordered stretch occupies residues 538 to 564; it reads VREERARENQTQQETPTVDVPSTELDD.

The protein belongs to the 4Fe4S bacterial-type ferredoxin family. RnfC subfamily. The complex is composed of six subunits: RnfA, RnfB, RnfC, RnfD, RnfE and RnfG. [4Fe-4S] cluster serves as cofactor.

Its subcellular location is the cell inner membrane. Its function is as follows. Part of a membrane-bound complex that couples electron transfer with translocation of ions across the membrane. This is Ion-translocating oxidoreductase complex subunit C from Pectobacterium carotovorum subsp. carotovorum (strain PC1).